A 318-amino-acid chain; its full sequence is D-alanine--D-alanine ligase (318 aa).

An ATP-grasp domain is found at 116 to 315; that stretch reads KQVWQSLGLP…FEQLSLAVLA (200 aa). 146–201 is a binding site for ATP; that stretch reads MSRLGDLVMVKPAQEGSSIGMAKVSNAQQLAAAIQQAFEYDDKVLLEQFIQGSEYT. Asp269, Glu282, and Asn284 together coordinate Mg(2+).

The protein belongs to the D-alanine--D-alanine ligase family. Mg(2+) is required as a cofactor. Requires Mn(2+) as cofactor.

The protein resides in the cytoplasm. It carries out the reaction 2 D-alanine + ATP = D-alanyl-D-alanine + ADP + phosphate + H(+). The protein operates within cell wall biogenesis; peptidoglycan biosynthesis. Functionally, cell wall formation. This chain is D-alanine--D-alanine ligase, found in Pseudoalteromonas atlantica (strain T6c / ATCC BAA-1087).